The following is a 338-amino-acid chain: Holliday junction branch migration complex subunit RuvB (338 aa).

Residues 1 to 180 form a large ATPase domain (RuvB-L) region; it reads MERLLDNKFS…FGIIERLDYY (180 aa). ATP-binding residues include Leu19, Arg20, Gly61, Lys64, Thr65, Thr66, Arg170, Tyr180, and Arg217. Thr65 contacts Mg(2+). Residues 181-251 form a small ATPAse domain (RuvB-S) region; that stretch reads TVEELSQIVM…VAKSGLEMFE (71 aa). Residues 254–338 form a head domain (RuvB-H) region; that stretch reads EYGLDLVDRN…FKLKESGDNR (85 aa). DNA is bound by residues Lys309 and Arg314.

The protein belongs to the RuvB family. In terms of assembly, homohexamer. Forms an RuvA(8)-RuvB(12)-Holliday junction (HJ) complex. HJ DNA is sandwiched between 2 RuvA tetramers; dsDNA enters through RuvA and exits via RuvB. An RuvB hexamer assembles on each DNA strand where it exits the tetramer. Each RuvB hexamer is contacted by two RuvA subunits (via domain III) on 2 adjacent RuvB subunits; this complex drives branch migration. In the full resolvosome a probable DNA-RuvA(4)-RuvB(12)-RuvC(2) complex forms which resolves the HJ.

Its subcellular location is the cytoplasm. The enzyme catalyses ATP + H2O = ADP + phosphate + H(+). Its function is as follows. The RuvA-RuvB-RuvC complex processes Holliday junction (HJ) DNA during genetic recombination and DNA repair, while the RuvA-RuvB complex plays an important role in the rescue of blocked DNA replication forks via replication fork reversal (RFR). RuvA specifically binds to HJ cruciform DNA, conferring on it an open structure. The RuvB hexamer acts as an ATP-dependent pump, pulling dsDNA into and through the RuvAB complex. RuvB forms 2 homohexamers on either side of HJ DNA bound by 1 or 2 RuvA tetramers; 4 subunits per hexamer contact DNA at a time. Coordinated motions by a converter formed by DNA-disengaged RuvB subunits stimulates ATP hydrolysis and nucleotide exchange. Immobilization of the converter enables RuvB to convert the ATP-contained energy into a lever motion, pulling 2 nucleotides of DNA out of the RuvA tetramer per ATP hydrolyzed, thus driving DNA branch migration. The RuvB motors rotate together with the DNA substrate, which together with the progressing nucleotide cycle form the mechanistic basis for DNA recombination by continuous HJ branch migration. Branch migration allows RuvC to scan DNA until it finds its consensus sequence, where it cleaves and resolves cruciform DNA. The chain is Holliday junction branch migration complex subunit RuvB from Caldicellulosiruptor bescii (strain ATCC BAA-1888 / DSM 6725 / KCTC 15123 / Z-1320) (Anaerocellum thermophilum).